A 373-amino-acid chain; its full sequence is Leucoanthocyanidin dioxygenase 2 (373 aa).

Positions 216–315 (LLLQLKINYY…RVSWVVFCEP (100 aa)) constitute a Fe2OG dioxygenase domain. Residues histidine 240, aspartate 242, and histidine 296 each coordinate Fe cation. Arginine 306 is a 2-oxoglutarate binding site.

It belongs to the iron/ascorbate-dependent oxidoreductase family. L-ascorbate is required as a cofactor. Requires Fe(2+) as cofactor.

It carries out the reaction a (2R,3S,4S)-leucoanthocyanidin + 2-oxoglutarate + O2 = a 4-H-anthocyanidin with a 3-hydroxy group + succinate + CO2 + 2 H2O. The protein operates within pigment biosynthesis; anthocyanin biosynthesis. Functionally, involved in anthocyanin and protoanthocyanidin biosynthesis by catalyzing the oxidation of leucoanthocyanidins into anthocyanidins. This chain is Leucoanthocyanidin dioxygenase 2, found in Oryza sativa subsp. japonica (Rice).